The primary structure comprises 231 residues: NADH-ubiquinone oxidoreductase chain 4 (231 aa).

6 helical membrane-spanning segments follow: residues 1–21 (PIAGSMVLAAILLKLGGYGII), 34–54 (MFLPFVVLALWGAILANLTCL), 61–80 (SLIAYSSVSHMGLVVAAIII), 85–107 (GLAGAMTLMIAHGFTSSALFCLA), 128–148 (ILPMATTWWLLTNLMNIAIPP), and 169–189 (TIILLGLSMLITASYSLHMFL).

It belongs to the complex I subunit 4 family.

The protein resides in the mitochondrion membrane. The catalysed reaction is a ubiquinone + NADH + 5 H(+)(in) = a ubiquinol + NAD(+) + 4 H(+)(out). In terms of biological role, core subunit of the mitochondrial membrane respiratory chain NADH dehydrogenase (Complex I) that is believed to belong to the minimal assembly required for catalysis. Complex I functions in the transfer of electrons from NADH to the respiratory chain. The immediate electron acceptor for the enzyme is believed to be ubiquinone. In Gloydius blomhoffii (Mamushi), this protein is NADH-ubiquinone oxidoreductase chain 4 (MT-ND4).